We begin with the raw amino-acid sequence, 341 residues long: MLSDRQQMILNAIVDNYIHSAEPVGSRTISKRDDIGFSSATIRNEMSDLEELGYLEQPHTSAGRVPSTKGYRFYVDNLIQPHLLEETELGKLKQLFAERILHAEQVVEYTAQILSQLTNYTAIVLGPEIFEHRLKHIQIVPLNAEQAVAIVVTHTGRVENKLIDLPEGIGAGEIEKLVNLLNAKLTDVPLWQLRQRLYQEISGEMQRHTEQYEEILQLLNNSLTQEEERVYLRGATKIMNQPEFRDVDKVKDILELLEQHDQLMNVIGMQGDGLTVRIGQENQLDAIKQCSIITTSYSLGGKPVGMVGILGPTRMEYGKVITVLNHLAEGLSRMLTSQFEK.

This sequence belongs to the HrcA family.

Negative regulator of class I heat shock genes (grpE-dnaK-dnaJ and groELS operons). Prevents heat-shock induction of these operons. The sequence is that of Heat-inducible transcription repressor HrcA from Brevibacillus brevis (strain 47 / JCM 6285 / NBRC 100599).